A 149-amino-acid chain; its full sequence is uncharacterized protein (149 aa).

3 helical membrane passes run 39–61, 82–104, and 119–141; these read VPLG…LIIG, VFGY…GAIL, and WMMM…SIYL.

It to M.pneumoniae MPN_090.

It is found in the cell membrane. This is an uncharacterized protein from Mycoplasma pneumoniae (strain ATCC 29342 / M129 / Subtype 1) (Mycoplasmoides pneumoniae).